A 507-amino-acid chain; its full sequence is ATP synthase subunit alpha, chloroplastic (507 aa).

Residue 170-177 (GDRQTGKT) participates in ATP binding.

This sequence belongs to the ATPase alpha/beta chains family. F-type ATPases have 2 components, CF(1) - the catalytic core - and CF(0) - the membrane proton channel. CF(1) has five subunits: alpha(3), beta(3), gamma(1), delta(1), epsilon(1). CF(0) has four main subunits: a, b, b' and c.

It localises to the plastid. It is found in the chloroplast thylakoid membrane. The catalysed reaction is ATP + H2O + 4 H(+)(in) = ADP + phosphate + 5 H(+)(out). In terms of biological role, produces ATP from ADP in the presence of a proton gradient across the membrane. The alpha chain is a regulatory subunit. This Huperzia lucidula (Shining clubmoss) protein is ATP synthase subunit alpha, chloroplastic.